A 196-amino-acid chain; its full sequence is Endoribonuclease YbeY (196 aa).

Positions 120, 124, and 130 each coordinate Zn(2+).

Belongs to the endoribonuclease YbeY family. Zn(2+) is required as a cofactor.

It localises to the cytoplasm. Single strand-specific metallo-endoribonuclease involved in late-stage 70S ribosome quality control and in maturation of the 3' terminus of the 16S rRNA. The protein is Endoribonuclease YbeY of Corynebacterium glutamicum (strain R).